The following is a 90-amino-acid chain: Large ribosomal subunit protein eL33 (90 aa).

This sequence belongs to the eukaryotic ribosomal protein eL33 family.

In Methanopyrus kandleri (strain AV19 / DSM 6324 / JCM 9639 / NBRC 100938), this protein is Large ribosomal subunit protein eL33.